The following is an 88-amino-acid chain: Small ribosomal subunit protein uS17 (88 aa).

It belongs to the universal ribosomal protein uS17 family. In terms of assembly, part of the 30S ribosomal subunit.

Its function is as follows. One of the primary rRNA binding proteins, it binds specifically to the 5'-end of 16S ribosomal RNA. This is Small ribosomal subunit protein uS17 from Lactobacillus delbrueckii subsp. bulgaricus (strain ATCC 11842 / DSM 20081 / BCRC 10696 / JCM 1002 / NBRC 13953 / NCIMB 11778 / NCTC 12712 / WDCM 00102 / Lb 14).